The following is a 280-amino-acid chain: Urease accessory protein UreD 1 (280 aa).

The protein belongs to the UreD family. In terms of assembly, ureD, UreF and UreG form a complex that acts as a GTP-hydrolysis-dependent molecular chaperone, activating the urease apoprotein by helping to assemble the nickel containing metallocenter of UreC. The UreE protein probably delivers the nickel.

The protein resides in the cytoplasm. In terms of biological role, required for maturation of urease via the functional incorporation of the urease nickel metallocenter. This chain is Urease accessory protein UreD 1, found in Brucella canis (strain ATCC 23365 / NCTC 10854 / RM-666).